Here is a 396-residue protein sequence, read N- to C-terminus: Mevalonate kinase (396 aa).

ATP is bound by residues lysine 13, asparagine 55, serine 135, and 140–146; that span reads GAGLGSS. Catalysis depends on serine 146, which acts as the Proton donor. Mg(2+)-binding residues include serine 146 and glutamate 193. The active-site Proton acceptor is aspartate 204.

This sequence belongs to the GHMP kinase family. Mevalonate kinase subfamily. Homodimer. It depends on Mg(2+) as a cofactor.

It is found in the cytoplasm. Its subcellular location is the peroxisome. It catalyses the reaction (R)-mevalonate + ATP = (R)-5-phosphomevalonate + ADP + H(+). It functions in the pathway isoprenoid biosynthesis; isopentenyl diphosphate biosynthesis via mevalonate pathway; isopentenyl diphosphate from (R)-mevalonate: step 1/3. Its activity is regulated as follows. Farnesyl pyrophosphate and geranyl pyrophosphate inhibit mevalonate kinase activity by binding competitively at the ATP-binding sites. In terms of biological role, catalyzes the phosphorylation of mevalonate to mevalonate 5-phosphate, a key step in isoprenoid and cholesterol biosynthesis. The protein is Mevalonate kinase of Homo sapiens (Human).